The primary structure comprises 508 residues: BICD family-like cargo adapter 2 (508 aa).

Residues 1–22 (MSSPDGPSFPSGPLSGGASPSG) show a composition bias toward low complexity. Disordered stretches follow at residues 1-27 (MSSPDGPSFPSGPLSGGASPSGDEGFF), 132-152 (LGEQRSEQQDSGRERARALSE), and 300-351 (AHSL…TSLS). 2 coiled-coil regions span residues 64–300 (AAEL…SELA) and 353–458 (AEIL…DMQV). The segment covering 135–149 (QRSEQQDSGRERARA) has biased composition (basic and acidic residues). Residues 470 to 491 (KELSASASSSTPRRAAPRFSLR) are disordered. Positions 473 to 489 (SASASSSTPRRAAPRFS) are enriched in low complexity.

Belongs to the BICDR family. In terms of assembly, interacts with RAB13.

The polypeptide is BICD family-like cargo adapter 2 (BICDL2) (Homo sapiens (Human)).